The sequence spans 157 residues: Probable succinate transporter subunit YjjB (157 aa).

A run of 4 helical transmembrane segments spans residues 8–28 (FALA…AMVF), 57–77 (LNIE…GIQW), 87–107 (VFTV…TAMI), and 129–149 (FLTA…PGLW).

It belongs to the ThrE exporter (TC 2.A.79) family. In terms of assembly, the transporter is composed of YjjB and YjjP.

Its subcellular location is the cell inner membrane. Its function is as follows. Involved in succinate export with YjjP. Both proteins are required for export. In Shigella boydii serotype 4 (strain Sb227), this protein is Probable succinate transporter subunit YjjB.